A 165-amino-acid chain; its full sequence is uncharacterized protein (165 aa).

The chain crosses the membrane as a helical span at residues 7 to 29; that stretch reads YPLIFTAFLLIAFCLIFFSYHLI.

It localises to the membrane. This is an uncharacterized protein from Bacillus subtilis (strain 168).